Reading from the N-terminus, the 227-residue chain is MGDNYSTYLLDIEGTVCPISFVKETLFPYFTNKVPQLVQQDTRDSPVSNILSQFHIDNKEQLQAHILELVAKDVKDPILKQLQGYVWAHGYESGQIKAPVYADAIDFIKRKKRVFIYSSGSVKAQKLLFGYVQDPNAPAHDSLDLNSYIDGYFDINTSGKKTETQSYANILRDIGAKASEVLFLSDNPLELDAAAGVGIATGLASRPGNAPVPDGQKYQVYKNFETL.

Residues Asp11 and Glu13 each contribute to the Mg(2+) site. Substrate is bound by residues 118 to 119 and Lys161; that span reads SS. A Mg(2+)-binding site is contributed by Asp186.

Belongs to the HAD-like hydrolase superfamily. MasA/MtnC family. In terms of assembly, monomer. The cofactor is Mg(2+).

The protein localises to the cytoplasm. The protein resides in the nucleus. It carries out the reaction 5-methylsulfanyl-2,3-dioxopentyl phosphate + H2O = 1,2-dihydroxy-5-(methylsulfanyl)pent-1-en-3-one + phosphate. It participates in amino-acid biosynthesis; L-methionine biosynthesis via salvage pathway; L-methionine from S-methyl-5-thio-alpha-D-ribose 1-phosphate: step 3/6. Its pathway is amino-acid biosynthesis; L-methionine biosynthesis via salvage pathway; L-methionine from S-methyl-5-thio-alpha-D-ribose 1-phosphate: step 4/6. Bifunctional enzyme that catalyzes the enolization of 2,3-diketo-5-methylthiopentyl-1-phosphate (DK-MTP-1-P) into the intermediate 2-hydroxy-3-keto-5-methylthiopentenyl-1-phosphate (HK-MTPenyl-1-P), which is then dephosphorylated to form the acireductone 1,2-dihydroxy-3-keto-5-methylthiopentene (DHK-MTPene). This Saccharomyces cerevisiae (strain ATCC 204508 / S288c) (Baker's yeast) protein is Enolase-phosphatase E1.